Reading from the N-terminus, the 292-residue chain is NAD kinase (292 aa).

Asp-72 (proton acceptor) is an active-site residue. NAD(+)-binding positions include 72-73 (DG), 146-147 (NE), His-157, Arg-174, Asp-176, and 187-192 (TAYSLS).

The protein belongs to the NAD kinase family. It depends on a divalent metal cation as a cofactor.

Its subcellular location is the cytoplasm. It catalyses the reaction NAD(+) + ATP = ADP + NADP(+) + H(+). Its function is as follows. Involved in the regulation of the intracellular balance of NAD and NADP, and is a key enzyme in the biosynthesis of NADP. Catalyzes specifically the phosphorylation on 2'-hydroxyl of the adenosine moiety of NAD to yield NADP. The sequence is that of NAD kinase from Shewanella woodyi (strain ATCC 51908 / MS32).